A 170-amino-acid polypeptide reads, in one-letter code: Cytidine diphosphoramidate kinase (170 aa).

The protein belongs to the APS kinase family.

The enzyme catalyses cytidine 5'-diphosphoramidate + ATP = cytidine 3'-phospho-5'-diphosphoramidate + ADP + H(+). The protein operates within capsule biogenesis; capsule polysaccharide biosynthesis. In terms of biological role, involved in the biosynthesis of the O-methyl phosphoramidate (MeOPN) group found on the capsular polysaccharide (CPS) of C.jejuni. Catalyzes the ATP-dependent phosphorylation of cytidine diphosphoramidate (CDP-NH(2)) to form cytidine 3'-phosphate 5'-diphosphoramidate. Can also use other substrates such as the corresponding adenine and uridine diphosphoramidate derivatives or cytidine diphosphoramidate analogs, with lower efficiency. This is Cytidine diphosphoramidate kinase from Campylobacter jejuni subsp. jejuni serotype O:2 (strain ATCC 700819 / NCTC 11168).